The chain runs to 97 residues: MDFNASLRRAIKTGDVILGQNNTEKCIKEGKAQMVVIAANCPENFRSQLGSYENLFIHTFEGSSVALGKACGKPFMVSTLAIVSPGESDILSLKRTA.

The protein belongs to the eukaryotic ribosomal protein eL30 family.

This is Large ribosomal subunit protein eL30 from Methanoregula boonei (strain DSM 21154 / JCM 14090 / 6A8).